The following is a 636-amino-acid chain: Ubiquitin-activating enzyme E1-like (636 aa).

ATP contacts are provided by residues Gly-28–Gly-33, Asp-52, Asn-60–Arg-63, Lys-76, and Asp-121–Arg-126. Cys-162 and Cys-165 together coordinate Zn(2+). The Glycyl thioester intermediate role is filled by Cys-177. Zn(2+) is bound by residues Cys-435 and Cys-438. The tract at residues Asp-581–Asp-636 is disordered. Over residues Leu-586–Ile-595 the composition is skewed to acidic residues. The Nuclear localization signal signature appears at Lys-619–Lys-622. A compositionally biased stretch (polar residues) spans Glu-626–Asp-636.

Belongs to the ubiquitin-activating E1 family. As to quaternary structure, heterodimer of UBA2 and AOS1. The complex binds SMT3. Post-translationally, multiubiquitinated in vivo.

The protein localises to the nucleus. It participates in protein modification; protein sumoylation. Functionally, the dimeric enzyme acts as a SMT3 E1 ligase. It mediates ATP-dependent activation of SMT3 and formation of a thioester with a conserved cysteine residue on AOS1. This Saccharomyces cerevisiae (strain ATCC 204508 / S288c) (Baker's yeast) protein is Ubiquitin-activating enzyme E1-like (UBA2).